A 291-amino-acid chain; its full sequence is Hydroxysteroid 11-beta-dehydrogenase 1-like protein B (291 aa).

The first 17 residues, 1–17, serve as a signal peptide directing secretion; sequence MAGVILLLLSLCVGYIA. NADP(+) contacts are provided by residues 40-66, 91-92, and 118-120; these read GSST…TARR, DM, and NHI. Substrate is bound at residue S170. Catalysis depends on Y183, which acts as the Proton acceptor. Residues 183–187 and 216–222 each bind NADP(+); these read YCASK and GYIDTEN.

It belongs to the short-chain dehydrogenases/reductases (SDR) family.

The protein resides in the secreted. The catalysed reaction is cortisone + NADPH + H(+) = cortisol + NADP(+). Its function is as follows. Unidirectional NADP(+)-dependent cortisol dehydrogenase (in vitro). This chain is Hydroxysteroid 11-beta-dehydrogenase 1-like protein B (hsd11b1l-b), found in Xenopus laevis (African clawed frog).